A 419-amino-acid chain; its full sequence is Methyltransferase/ribosomally synthesized type I borosin cyclic peptide precursor gjuMa (419 aa).

Positions 1 to 255 (MATPIATTTN…AISTLYVPPR (255 aa)) are methyltransferase domain. Catalysis depends on residues R79, Y83, and Y105. Residues Y105, H107, V110, A137, Q179, G217, S248, and T249 each contribute to the S-adenosyl-L-methionine site. A clasp domain region spans residues 256–381 (DISPVDPTMA…GAVYALMSRP (126 aa)). A precursor leader region spans residues 382–404 (TGDIAREKELTNDEIANNHGAPY). N-methylserine is present on S408. A409 is modified (N-methylalanine). V410 carries the N-methylvaline modification. Residues I411 and I412 each carry the N-methylisoleucine modification. Residues A413 and A414 each carry the N-methylalanine modification. An N-methylisoleucine mark is found at I415 and I416.

The protein in the N-terminal section; belongs to the precorrin methyltransferase family. As to quaternary structure, homodimer. GjuMA automethylates at Ser-408, Ala-409, Val-410, Ile-411, Ile-412, Ala-413, Ala-414, Ile-415 and Ile-416 before being processed by ae prolyloligopeptidase which likely forms a peptidyl ester upon removal of the follower propeptide, which then undergoes macrocyclization with the N-terminus of the modified core peptide. Peptide backbone alpha-N-methylations change the physicochemical properties of amide bonds to provide structural constraints and other favorable characteristics including biological membrane permeability to peptides.

The protein operates within secondary metabolite biosynthesis. In terms of biological role, fusion protein of the methyltransferase gjuM and the type I borosin core peptide; part of the gene cluster that mediates the biosynthesis of a type I borosin, a highly methylated cyclic peptide with potent biological activities. Type I borosins derive from the C-terminus of the fusion protein, and it is the same protein that methylates its own C-terminus using S-adenosyl methionine (SAM). The C-terminus is subsequently cleaved off and macrocyclized by a prolyloligopeptidase to give the final product. The polypeptide is Methyltransferase/ribosomally synthesized type I borosin cyclic peptide precursor gjuMa (Gymnopilus junonius (Spectacular rustgill mushroom)).